Reading from the N-terminus, the 712-residue chain is Semaphorin-1A (712 aa).

Positions 1–20 (MVVKILVWSICLIALCHAWM) are cleaved as a signal peptide. One can recognise a Sema domain in the interval 21–483 (PDSSSKLINH…GKDEIRLANL (463 aa)). The Extracellular segment spans residues 21–601 (PDSSSKLINH…IGGCAVRQQL (581 aa)). 2 N-linked (GlcNAc...) asparagine glycosylation sites follow: Asn42 and Asn69. 2 disulfide bridges follow: Cys95–Cys105 and Cys123–Cys132. 2 N-linked (GlcNAc...) asparagine glycosylation sites follow: Asn161 and Asn265. 4 disulfides stabilise this stretch: Cys242/Cys357, Cys266/Cys316, Cys486/Cys503, and Cys495/Cys512. Residues 602–622 (VIYTAGTLHIVVVVVSIVGLF) form a helical membrane-spanning segment. Topologically, residues 623 to 712 (SWLYSGLSVF…TLQKIKKTYI (90 aa)) are cytoplasmic.

The protein belongs to the semaphorin family.

It localises to the membrane. Functionally, plays a role in growth cones guidance. The chain is Semaphorin-1A (SEMA-1A) from Tribolium confusum (Confused flour beetle).